A 332-amino-acid chain; its full sequence is MHLSLLALFLFWISGCFTAQDPVTGPEEVSGYEQGSLTVWCRYGSWWKDYSKYWCRGPKRSSCEIRVETDASERLVKENHVSIRDDQTNFTFTVTMEDLRMSDAGIYWCGITKAGYDHMFKVHVSINPVPTTPTTTSTTTIFTVTTTVKETSTLSTQTSHYSDNRYDSGGVGDGNGFLDLSVLLPVISAALLLLLLVVSLIAWRMVRRQKKAAGPPSGQADSVTHILCPPKPHVQPLEDDLCYANLSLQQPRTSPLKKGSSMSSSGKDHQEEVEYVTMAPFPREEISYAALSLASLGQEPTYSNTACLVTHGPRTNLGEETTEYSSIRRPMP.

A signal peptide spans 1–18; that stretch reads MHLSLLALFLFWISGCFT. Topologically, residues 19 to 181 are extracellular; that stretch reads AQDPVTGPEE…GDGNGFLDLS (163 aa). An Ig-like V-type domain is found at 22–125; sequence PVTGPEEVSG…YDHMFKVHVS (104 aa). Intrachain disulfides connect Cys41–Cys109 and Cys55–Cys63. N-linked (GlcNAc...) asparagine glycosylation is present at Asn89. A helical transmembrane segment spans residues 182–202; sequence VLLPVISAALLLLLLVVSLIA. The Cytoplasmic segment spans residues 203–332; the sequence is WRMVRRQKKA…EYSSIRRPMP (130 aa). Disordered stretches follow at residues 251–270 and 313–332; these read PRTS…KDHQ and PRTN…RPMP.

Belongs to the CD300 family. As to quaternary structure, interacts with PTPN6/SHP-1 in a tyrosine phosphorylation dependent manner. Interacts with IL4R. In terms of processing, phosphorylated on tyrosine.

The protein resides in the cell membrane. Functionally, acts as an inhibitory receptor for myeloid cells and mast cells. Positively regulates the phagocytosis of apoptotic cells (efferocytosis) via phosphatidylserine (PS) recognition; recognizes and binds PS as a ligand which is expressed on the surface of apoptotic cells. Plays an important role in the maintenance of immune homeostasis, by promoting macrophage-mediated efferocytosis and by inhibiting dendritic cell-mediated efferocytosis. Negatively regulates Fc epsilon receptor-dependent mast cell activation and allergic responses via binding to ceramide and sphingomyelin which act as ligands. May act as a coreceptor for interleukin 4 (IL-4). Associates with and regulates IL-4 receptor alpha-mediated responses by augmenting IL-4- and IL-13-induced signaling. Negatively regulates the Toll-like receptor (TLR) signaling mediated by MYD88 and TRIF through activation of PTPN6/SHP-1 and PTPN11/SHP-2. Inhibits osteoclast formation. Induces macrophage cell death upon engagement. In Rattus norvegicus (Rat), this protein is CMRF35-like molecule 1 (Cd300lf).